A 398-amino-acid polypeptide reads, in one-letter code: Acetate kinase (398 aa).

Asn-7 contributes to the Mg(2+) binding site. Lys-14 lines the ATP pocket. Position 91 (Arg-91) interacts with substrate. The active-site Proton donor/acceptor is the Asp-148. ATP is bound by residues 208-212 (HIGNG), 283-285 (DMR), and 331-335 (GVGEN). Glu-384 contributes to the Mg(2+) binding site.

This sequence belongs to the acetokinase family. In terms of assembly, homodimer. Requires Mg(2+) as cofactor. It depends on Mn(2+) as a cofactor.

It is found in the cytoplasm. The catalysed reaction is acetate + ATP = acetyl phosphate + ADP. The protein operates within metabolic intermediate biosynthesis; acetyl-CoA biosynthesis; acetyl-CoA from acetate: step 1/2. Catalyzes the formation of acetyl phosphate from acetate and ATP. Can also catalyze the reverse reaction. In Bacteroides fragilis (strain ATCC 25285 / DSM 2151 / CCUG 4856 / JCM 11019 / LMG 10263 / NCTC 9343 / Onslow / VPI 2553 / EN-2), this protein is Acetate kinase.